Reading from the N-terminus, the 258-residue chain is Acyl-[acyl-carrier-protein]--UDP-N-acetylglucosamine O-acyltransferase (258 aa).

The protein belongs to the transferase hexapeptide repeat family. LpxA subfamily. As to quaternary structure, homotrimer.

Its subcellular location is the cytoplasm. The enzyme catalyses a (3R)-hydroxyacyl-[ACP] + UDP-N-acetyl-alpha-D-glucosamine = a UDP-3-O-[(3R)-3-hydroxyacyl]-N-acetyl-alpha-D-glucosamine + holo-[ACP]. The protein operates within glycolipid biosynthesis; lipid IV(A) biosynthesis; lipid IV(A) from (3R)-3-hydroxytetradecanoyl-[acyl-carrier-protein] and UDP-N-acetyl-alpha-D-glucosamine: step 1/6. Its function is as follows. Involved in the biosynthesis of lipid A, a phosphorylated glycolipid that anchors the lipopolysaccharide to the outer membrane of the cell. The polypeptide is Acyl-[acyl-carrier-protein]--UDP-N-acetylglucosamine O-acyltransferase (Pseudomonas fluorescens (strain ATCC BAA-477 / NRRL B-23932 / Pf-5)).